The chain runs to 336 residues: HTH-type transcriptional repressor PurR (336 aa).

Residues 2–56 form the HTH lacI-type domain; sequence ATIKDVAKMAGVSTTTVSHVINKTRFVAKDTEEAVLSAIKQLNYSPSAVARSLKV. A DNA-binding region (H-T-H motif) is located at residues 4-23; sequence IKDVAKMAGVSTTTVSHVIN. A DNA-binding region spans residues 48-56; sequence SAVARSLKV. Y73, K188, T190, F219, and D273 together coordinate hypoxanthine.

Homodimer.

It functions in the pathway purine metabolism; purine nucleotide biosynthesis [regulation]. In terms of biological role, is the main repressor of the genes involved in the de novo synthesis of purine nucleotides, regulating purB, purC, purEK, purF, purHD, purL, purMN and guaBA expression. PurR is allosterically activated to bind its cognate DNA by binding the purine corepressors, hypoxanthine or guanine, thereby effecting transcription repression. The sequence is that of HTH-type transcriptional repressor PurR from Haemophilus influenzae (strain 86-028NP).